A 474-amino-acid polypeptide reads, in one-letter code: PTS system N-acetylmuramic acid-specific EIIBC component (474 aa).

The PTS EIIB type-1 domain occupies 1–89 (MAKEISSELL…SELLGDAPVQ (89 aa)). At 1–123 (MAKEISSELL…LAKFATIFTP (123 aa)) the chain is on the cytoplasmic side. Cys29 serves as the catalytic Phosphocysteine intermediate; for EIIB activity. The PTS EIIC type-1 domain occupies 115-474 (AKFATIFTPL…LFGCRNVNLD (360 aa)). A helical membrane pass occupies residues 124–144 (LIPGFIAAGLLLGIATLIATV). At 145–157 (MHVPADAQGTLPD) the chain is on the periplasmic side. The helical transmembrane segment at 158 to 178 (ALNFMKVFSKGLFTFLVILVG) threads the bilayer. Residues 179–180 (YN) are Cytoplasmic-facing. The chain crosses the membrane as a helical span at residues 181 to 201 (AAQAFGGTGVNGAIIAALFLL). Residues 202 to 217 (GYNPAATTGYYAGFHD) are Periplasmic-facing. A helical transmembrane segment spans residues 218-238 (FFGLPIDPRGNIIGVLIAAWA). Topologically, residues 239 to 260 (CARIEGMVRRFMPDDLDMLLTS) are cytoplasmic. A helical membrane pass occupies residues 261 to 281 (LITLLITATLAYLIIMPLGGW). The Periplasmic segment spans residues 282–301 (LFEGMSWLFMHLNSNPFGCA). Residues 302 to 322 (VLAGLFLIAVVFGVHQGFIPV) form a helical membrane-spanning segment. Residues 323–334 (YLALMDSQGFNS) are Cytoplasmic-facing. A helical membrane pass occupies residues 335-355 (LFPILSMAGAGQVGAALALYW). The Periplasmic segment spans residues 356-368 (RAQPHSALRSQVR). A helical membrane pass occupies residues 369–389 (GAIIPGLLGVGEPLIYGVTLP). Residues 390 to 393 (RMKP) lie on the Cytoplasmic side of the membrane. The chain crosses the membrane as a helical span at residues 394 to 414 (FVTACLGGAAGGLFIGLIAWW). The Periplasmic portion of the chain corresponds to 415 to 440 (GLPMGLNSAFGPSGLVALPLMTSAQG). Residues 441 to 461 (ILPAMAVYAGGILVAWVCGFI) form a helical membrane-spanning segment. At 462–474 (FTTLFGCRNVNLD) the chain is on the cytoplasmic side.

It localises to the cell inner membrane. The catalysed reaction is N-acetyl-beta-D-muramate(out) + N(pros)-phospho-L-histidyl-[protein] = N-acetyl-beta-D-muramate 6-phosphate(in) + L-histidyl-[protein]. In terms of biological role, the phosphoenolpyruvate-dependent sugar phosphotransferase system (sugar PTS), a major carbohydrate active transport system, catalyzes the phosphorylation of incoming sugar substrates concomitantly with their translocation across the cell membrane. This system is involved in N-acetylmuramic acid (MurNAc) transport, yielding cytoplasmic MurNAc-6-P. Is also able to take up anhydro-N-acetylmuramic acid (anhMurNAc), but cannot phosphorylate the carbon 6, probably because of the 1,6-anhydro ring. This is PTS system N-acetylmuramic acid-specific EIIBC component (murP) from Shigella flexneri.